Consider the following 751-residue polypeptide: Semaphorin-3C (751 aa).

The first 20 residues, 1–20 (MAFRTICVLVGVFICSICVK), serve as a signal peptide directing secretion. The 484-residue stretch at 28–511 (RVYLTFDELR…SNEGVSQVSL (484 aa)) folds into the Sema domain. Asn81 carries N-linked (GlcNAc...) asparagine glycosylation. Cys101 and Cys112 form a disulfide bridge. N-linked (GlcNAc...) asparagine glycosylation occurs at Asn123. Residues Cys130 and Cys139 are joined by a disulfide bond. N-linked (GlcNAc...) asparagine glycans are attached at residues Asn252 and Asn268. 2 disulfide bridges follow: Cys266/Cys378 and Cys290/Cys338. Asn465 carries an N-linked (GlcNAc...) asparagine glycan. Residues Cys514 and Cys532 are joined by a disulfide bond. The Ig-like C2-type domain maps to 571 to 655 (AYRNAAEIVQ…TENSFKQTIA (85 aa)). 2 N-linked (GlcNAc...) asparagine glycosylation sites follow: Asn585 and Asn586. Cysteines 643 and 709 form a disulfide. Positions 712–731 (TRQQHQQGDESQKMRGDYGK) are enriched in basic and acidic residues. The disordered stretch occupies residues 712-751 (TRQQHQQGDESQKMRGDYGKLKALINSRKSRNRRNQLPES).

It belongs to the semaphorin family. Interacts with PLXND1. In terms of tissue distribution, expressed intensely in the heart, skeletal muscle, colon, small intestine, ovary, testis, and prostate. Faint expression ubiquitously among other organs, including brain.

It is found in the secreted. Binds to plexin family members and plays an important role in the regulation of developmental processes. Required for normal cardiovascular development during embryogenesis. Functions as attractant for growing axons, and thereby plays an important role in axon growth and axon guidance. The sequence is that of Semaphorin-3C (SEMA3C) from Homo sapiens (Human).